Here is a 413-residue protein sequence, read N- to C-terminus: MNIPPELTFEVLVRLPLKSLARFRSVRKEWKLVIDSEFFRDCFMSHNSSSVSWSIIQTRPHKLTLEIVGHHGCKTWGLTRSPGSLVGFFADTTIKRLRVLACTDGLVLIYTETSYGTPMHYVGNPLFQEWCPIPLPSYFYLQSVERIRNHQRFNDSALVIKMQSGAVVSYKVVWLFPRNSTTIDFLIYSSDTGMWEARIATCLHSSFWFSHHKPIALNGILHWLCNFSTSFVAYDFYGGHDDYACHIISFPDCEKDDDQLRRFRRTLSTSDGSIVYFNEFGENGNRRLRVWRLVKYTGGPEAWQLFWEVSLASVTKLGIDYFPVVMHPLKSEIIYLWSRNKKGMVLFNLRTNVFSLHKESEDETKCMDGCTLSFNRCSEYMETIHNYGGPNYLLASQYVLPRWLHRLPRPQPS.

Positions 1-42 (MNIPPELTFEVLVRLPLKSLARFRSVRKEWKLVIDSEFFRDC) constitute an F-box domain.

This Arabidopsis thaliana (Mouse-ear cress) protein is Putative F-box protein At3g23970.